The following is a 53-amino-acid chain: IgA-inducing protein homolog (53 aa).

Positions 1–30 (MCSYYHMKKRSVSGCNITIFAVMFSHLSAG) are cleaved as a signal peptide.

It is found in the secreted. Its function is as follows. Enhances IgA secretion from B-cells stimulated via CD40. This chain is IgA-inducing protein homolog (IGIP), found in Homo sapiens (Human).